A 439-amino-acid polypeptide reads, in one-letter code: uncharacterized protein (439 aa).

Residues 1–55 enclose the TRAM domain; that stretch reads MLEQVRIQKMVNGGYGLAHLSNGKVVLVEGAYPGEEVLIKTYREKRDFSFGKVVS. The [4Fe-4S] cluster site is built by Cys-68, Cys-74, Cys-77, and Cys-149. S-adenosyl-L-methionine is bound by residues Gln-272, Tyr-301, Glu-322, and Asp-367. The active-site Nucleophile is Cys-394.

It belongs to the class I-like SAM-binding methyltransferase superfamily. RNA M5U methyltransferase family.

This is an uncharacterized protein from Thermotoga maritima (strain ATCC 43589 / DSM 3109 / JCM 10099 / NBRC 100826 / MSB8).